We begin with the raw amino-acid sequence, 360 residues long: Phenylalanine--tRNA ligase alpha subunit (360 aa).

Glu260 serves as a coordination point for Mg(2+).

It belongs to the class-II aminoacyl-tRNA synthetase family. Phe-tRNA synthetase alpha subunit type 1 subfamily. As to quaternary structure, tetramer of two alpha and two beta subunits. It depends on Mg(2+) as a cofactor.

It localises to the cytoplasm. It catalyses the reaction tRNA(Phe) + L-phenylalanine + ATP = L-phenylalanyl-tRNA(Phe) + AMP + diphosphate + H(+). The sequence is that of Phenylalanine--tRNA ligase alpha subunit from Methylobacterium sp. (strain 4-46).